A 133-amino-acid polypeptide reads, in one-letter code: Large ribosomal subunit protein bL17 (133 aa).

This sequence belongs to the bacterial ribosomal protein bL17 family. As to quaternary structure, part of the 50S ribosomal subunit. Contacts protein L32.

In Verminephrobacter eiseniae (strain EF01-2), this protein is Large ribosomal subunit protein bL17.